Reading from the N-terminus, the 337-residue chain is 25S rRNA (adenine(2142)-N(1))-methyltransferase (337 aa).

The S-adenosyl-L-methionine site is built by G180 and D201.

The protein belongs to the BMT2 family.

Its subcellular location is the nucleus. The protein localises to the nucleolus. It carries out the reaction adenosine(2142) in 25S rRNA + S-adenosyl-L-methionine = N(1)-methyladenosine(2142) in 25S rRNA + S-adenosyl-L-homocysteine + H(+). Functionally, S-adenosyl-L-methionine-dependent methyltransferase that specifically methylates the N(1) position of adenine 2142 in 25S rRNA. N(1)-methyladenine(2142) in 25S rRNA is present in helix 65, a region that accounts for most of the intersubunit surface of the large subunit. The protein is 25S rRNA (adenine(2142)-N(1))-methyltransferase of Saccharomyces cerevisiae (strain ATCC 204508 / S288c) (Baker's yeast).